Consider the following 145-residue polypeptide: Protein SprT-like (145 aa).

The SprT-like domain occupies 4–140 (TNYVQEVSLA…VCGNCHGKLM (137 aa)). Residue His64 coordinates Zn(2+). Glu65 is an active-site residue. Zn(2+) is bound at residue His68.

Belongs to the SprT family. Zn(2+) is required as a cofactor.

The protein resides in the cytoplasm. The sequence is that of Protein SprT-like from Streptococcus pyogenes serotype M3 (strain SSI-1).